Here is a 453-residue protein sequence, read N- to C-terminus: Nuclear hormone receptor family member nhr-12 (453 aa).

Positions 1–37 (MEQIPQEQKTEPFLASFTTTEKLGTETPTTSITPNTQ) are disordered. Over residues 18–36 (TTTEKLGTETPTTSITPNT) the composition is skewed to low complexity. Residues 44 to 119 (KPNCAVCNEV…VGMNPECVQN (76 aa)) constitute a DNA-binding region (nuclear receptor). 2 consecutive NR C4-type zinc fingers follow at residues 47 to 67 (CAVC…CRAC) and 83 to 107 (CRAG…YDKC). One can recognise an NR LBD domain in the interval 178–451 (FSPASLPGLS…ENFVNIINGK (274 aa)).

Belongs to the nuclear hormone receptor family.

It localises to the nucleus. Orphan nuclear receptor. The sequence is that of Nuclear hormone receptor family member nhr-12 (nhr-12) from Caenorhabditis elegans.